A 273-amino-acid chain; its full sequence is Ribosomal RNA small subunit methyltransferase A (273 aa).

6 residues coordinate S-adenosyl-L-methionine: Asn18, Leu20, Gly45, Glu66, Asp91, and Asn113.

This sequence belongs to the class I-like SAM-binding methyltransferase superfamily. rRNA adenine N(6)-methyltransferase family. RsmA subfamily.

The protein localises to the cytoplasm. It carries out the reaction adenosine(1518)/adenosine(1519) in 16S rRNA + 4 S-adenosyl-L-methionine = N(6)-dimethyladenosine(1518)/N(6)-dimethyladenosine(1519) in 16S rRNA + 4 S-adenosyl-L-homocysteine + 4 H(+). Specifically dimethylates two adjacent adenosines (A1518 and A1519) in the loop of a conserved hairpin near the 3'-end of 16S rRNA in the 30S particle. May play a critical role in biogenesis of 30S subunits. The chain is Ribosomal RNA small subunit methyltransferase A from Escherichia coli O157:H7.